Here is a 225-residue protein sequence, read N- to C-terminus: ATP synthase subunit a (225 aa).

The next 5 helical transmembrane spans lie at 16–36, 79–99, 105–125, 176–196, and 202–222; these read LFVY…VAKL, LVAT…IPGF, SLNL…FEGI, LFLL…AYAL, and VLQT…AVAI.

It belongs to the ATPase A chain family. F-type ATPases have 2 components, CF(1) - the catalytic core - and CF(0) - the membrane proton channel. CF(1) has five subunits: alpha(3), beta(3), gamma(1), delta(1), epsilon(1). CF(0) has three main subunits: a(1), b(2) and c(9-12). The alpha and beta chains form an alternating ring which encloses part of the gamma chain. CF(1) is attached to CF(0) by a central stalk formed by the gamma and epsilon chains, while a peripheral stalk is formed by the delta and b chains.

Its subcellular location is the cell inner membrane. Functionally, key component of the proton channel; it plays a direct role in the translocation of protons across the membrane. This is ATP synthase subunit a from Campylobacter curvus (strain 525.92).